A 118-amino-acid chain; its full sequence is Basic phospholipase A2 PA-10A (118 aa).

Disulfide bonds link C11–C71, C27–C117, C29–C45, C44–C98, C51–C91, C60–C84, and C78–C89. Y28, G30, and G32 together coordinate Ca(2+). The active site involves H48. D49 serves as a coordination point for Ca(2+). Residue D92 is part of the active site.

The protein belongs to the phospholipase A2 family. Group I subfamily. D49 sub-subfamily. It depends on Ca(2+) as a cofactor. In terms of tissue distribution, expressed by the venom gland.

The protein resides in the secreted. The enzyme catalyses a 1,2-diacyl-sn-glycero-3-phosphocholine + H2O = a 1-acyl-sn-glycero-3-phosphocholine + a fatty acid + H(+). Its function is as follows. PLA2 catalyzes the calcium-dependent hydrolysis of the 2-acyl groups in 3-sn-phosphoglycerides. This chain is Basic phospholipase A2 PA-10A, found in Pseudechis australis (Mulga snake).